The chain runs to 439 residues: N5-carboxyaminoimidazole ribonucleotide synthase (439 aa).

Residues K113, K160, 197–200, E205, and 283–284 each bind ATP; these read EERV and NE. In terms of domain architecture, ATP-grasp spans 117-313; that stretch reads RRRLAALGAA…QFEQHLRAVL (197 aa).

This sequence belongs to the PurK/PurT family. Homodimer.

It catalyses the reaction 5-amino-1-(5-phospho-beta-D-ribosyl)imidazole + hydrogencarbonate + ATP = 5-carboxyamino-1-(5-phospho-D-ribosyl)imidazole + ADP + phosphate + 2 H(+). It participates in purine metabolism; IMP biosynthesis via de novo pathway; 5-amino-1-(5-phospho-D-ribosyl)imidazole-4-carboxylate from 5-amino-1-(5-phospho-D-ribosyl)imidazole (N5-CAIR route): step 1/2. In terms of biological role, catalyzes the ATP-dependent conversion of 5-aminoimidazole ribonucleotide (AIR) and HCO(3)(-) to N5-carboxyaminoimidazole ribonucleotide (N5-CAIR). This is N5-carboxyaminoimidazole ribonucleotide synthase from Mycobacterium leprae (strain TN).